The primary structure comprises 445 residues: MANSNMKTLHSLEGIGKIQFEGKQSKNPLAFKSYNPSEVIGGKTMKDHLRFSVAYWHTLTADGTDMFGTGTMQRAWDSYSGMDLAKARLEVAFQLFDLLDVPYFSFHDRDIAPEGDTLQETNQHLDIILERMKEYMRDSGVKLLWNTANMFKHPRFVHGAATSCHADVFAYAAAQVKKGIETAKELRAENYVFWGGREGYDTLLNTDMKRELDHMASFLHMAVDYAKEIGYTGQFLIEPKPKEPTTHQYDADAATSIAFLKQYGLDTHFKLNIEANHATLAGHTFEHELRVARIHGLLGSVDANQGNTLLGWDTDEFPTDLYATTLAMYEILQNGGLGTGGLNFDAKVRRASFELEDILYAHIAGMDAFAKGLRVAHRLIEDRVFEDVIKHRYRSFSEGIGRDISEGKANFHILEEYALKHPLIRNESGREEQLKARLNQYLLED.

Active-site residues include histidine 107 and aspartate 110. Mg(2+) is bound by residues glutamate 238, glutamate 274, histidine 277, aspartate 302, aspartate 313, aspartate 315, and aspartate 345.

It belongs to the xylose isomerase family. Homotetramer. The cofactor is Mg(2+).

The protein localises to the cytoplasm. The enzyme catalyses alpha-D-xylose = alpha-D-xylulofuranose. This chain is Xylose isomerase, found in Bacillus pumilus (strain SAFR-032).